The sequence spans 92 residues: Small ribosomal subunit protein uS19 (92 aa).

It belongs to the universal ribosomal protein uS19 family.

Its function is as follows. Protein S19 forms a complex with S13 that binds strongly to the 16S ribosomal RNA. In Shewanella putrefaciens (strain CN-32 / ATCC BAA-453), this protein is Small ribosomal subunit protein uS19.